The sequence spans 304 residues: UDP-N-acetylenolpyruvoylglucosamine reductase (304 aa).

The region spanning 31-196 is the FAD-binding PCMH-type domain; it reads KVGGPADYLA…ISAKFNLKPG (166 aa). Arginine 175 is a catalytic residue. Serine 225 (proton donor) is an active-site residue. Glutamate 295 is an active-site residue.

This sequence belongs to the MurB family. FAD serves as cofactor.

The protein localises to the cytoplasm. It carries out the reaction UDP-N-acetyl-alpha-D-muramate + NADP(+) = UDP-N-acetyl-3-O-(1-carboxyvinyl)-alpha-D-glucosamine + NADPH + H(+). Its pathway is cell wall biogenesis; peptidoglycan biosynthesis. Its function is as follows. Cell wall formation. This is UDP-N-acetylenolpyruvoylglucosamine reductase from Streptococcus thermophilus (strain CNRZ 1066).